The following is a 308-amino-acid chain: Acyl transferase (308 aa).

Active-site charge relay system residues include Ser-116, Asp-213, and His-243.

Belongs to the LuxD family.

It participates in lipid metabolism; fatty acid reduction for biolumincescence. Acyl transferase is part of the fatty acid reductase system required for aldehyde biosynthesis; it produces fatty acids for the luminescent reaction. The protein is Acyl transferase of Shewanella hanedai (Alteromonas hanedai).